We begin with the raw amino-acid sequence, 230 residues long: RNA polymerase sigma factor FliA (230 aa).

The segment at 6-78 is sigma-70 factor domain-2; sequence LWQRYVPLVR…MLDELRSRDW (73 aa). Residues 33–36 carry the Interaction with polymerase core subunit RpoC motif; that stretch reads DLLQ. The tract at residues 86–156 is sigma-70 factor domain-3; that stretch reads NAREVASAMQ…VEPMLEGHED (71 aa). The segment at 175–223 is sigma-70 factor domain-4; the sequence is AIEALPEREKMVLTLYYQEELNLKEIGAVLEVGESRVSQLHSQAIKRLR. Positions 197 to 216 form a DNA-binding region, H-T-H motif; that stretch reads LKEIGAVLEVGESRVSQLHS.

Belongs to the sigma-70 factor family. FliA subfamily.

The protein resides in the cytoplasm. Sigma factors are initiation factors that promote the attachment of RNA polymerase to specific initiation sites and are then released. This sigma factor controls the expression of flagella-related genes. This chain is RNA polymerase sigma factor FliA, found in Yersinia enterocolitica.